A 449-amino-acid polypeptide reads, in one-letter code: Glucose-6-phosphate isomerase (449 aa).

Residue Glu-291 is the Proton donor of the active site. Active-site residues include His-312 and Lys-426.

Belongs to the GPI family.

It is found in the cytoplasm. It catalyses the reaction alpha-D-glucose 6-phosphate = beta-D-fructose 6-phosphate. It participates in carbohydrate biosynthesis; gluconeogenesis. It functions in the pathway carbohydrate degradation; glycolysis; D-glyceraldehyde 3-phosphate and glycerone phosphate from D-glucose: step 2/4. In terms of biological role, catalyzes the reversible isomerization of glucose-6-phosphate to fructose-6-phosphate. This chain is Glucose-6-phosphate isomerase, found in Streptococcus agalactiae serotype Ia (strain ATCC 27591 / A909 / CDC SS700).